We begin with the raw amino-acid sequence, 527 residues long: Phosphoethanolamine transferase OpgE (527 aa).

Over 1–33 (MNLTLKESLVTRSRVFSPWTAFYFLQSLLINLG) the chain is Periplasmic. A helical transmembrane segment spans residues 34 to 54 (LGYPFSLLYTAAFTAILLLLW). Topologically, residues 55 to 62 (RTLPRVQK) are cytoplasmic. Residues 63 to 83 (VLVGVSSLVAACYFPFAQAYG) form a helical membrane-spanning segment. Over 84–106 (APNFNTLLALHSTNMEESTEILT) the chain is Periplasmic. A helical transmembrane segment spans residues 107 to 127 (IFPWYSYLVGLFIFALGVIAI). The Cytoplasmic portion of the chain corresponds to 128-146 (RRKKENEKARWNTFDSLCL). The chain crosses the membrane as a helical span at residues 147–167 (VFSVATFFVAPVQNLAWGGVF). Topologically, residues 168 to 527 (KLKDTGYPVF…LGTDIFDPKP (360 aa)) are periplasmic.

Belongs to the phosphoethanolamine transferase family.

It is found in the cell inner membrane. The protein operates within glycan metabolism; osmoregulated periplasmic glucan (OPG) biosynthesis. Catalyzes the addition of a phosphoethanolamine moiety to the osmoregulated periplasmic glucan (OPG) backbone. The chain is Phosphoethanolamine transferase OpgE (opgE) from Escherichia coli (strain K12).